We begin with the raw amino-acid sequence, 308 residues long: Atrochrysone carboxyl ACP thioesterase (308 aa).

Residues histidine 99, histidine 101, aspartate 103, and histidine 104 each coordinate Zn(2+). Aspartate 103 (proton donor/acceptor) is an active-site residue.

Belongs to the metallo-beta-lactamase superfamily. Zn(2+) serves as cofactor.

It catalyses the reaction atrochrysone carboxyl-[ACP] + H2O = atrochrysone carboxylate + holo-[ACP] + H(+). It participates in secondary metabolite biosynthesis. Atrochrysone carboxyl ACP thioesterase; part of the gene cluster that mediates the biosynthesis of physcion, a natural anthraquinone fungicide that can prevent plant fungal infections. The pathway begins with the polyketide synthase AcPKS that condenses 8 malonyl-CoA units to synthesize atrochrysone thioester which is released from the synthase by the atrochrysone carboxyl ACP thioesterase AcTE that breaks the thioester bond and leads to free atrochrysone carboxylic acid. Spontaneous decarboxylation of atrochrysone carboxylic acid leads to the formation of atrochrysone. Then, atrochrysone undergoes spontaneous dehydration and oxidation, giving the products emodin anthrone and emodin. The O-methyltransferase AcOMT then methylates the C-6 hydroxyl of emodin to form physcion. This is Atrochrysone carboxyl ACP thioesterase from Aspergillus chevalieri (Eurotium chevalieri).